The primary structure comprises 1203 residues: DNA-directed RNA polymerase subunit beta' (1203 aa).

Positions 60, 62, 75, and 78 each coordinate Zn(2+). Mg(2+) contacts are provided by Asp449, Asp451, and Asp453. Zn(2+) is bound by residues Cys818, Cys892, Cys899, and Cys902.

It belongs to the RNA polymerase beta' chain family. In terms of assembly, the RNAP catalytic core consists of 2 alpha, 1 beta, 1 beta' and 1 omega subunit. When a sigma factor is associated with the core the holoenzyme is formed, which can initiate transcription. Mg(2+) is required as a cofactor. Requires Zn(2+) as cofactor.

It catalyses the reaction RNA(n) + a ribonucleoside 5'-triphosphate = RNA(n+1) + diphosphate. Its function is as follows. DNA-dependent RNA polymerase catalyzes the transcription of DNA into RNA using the four ribonucleoside triphosphates as substrates. In Bacillus cereus (strain ZK / E33L), this protein is DNA-directed RNA polymerase subunit beta'.